The sequence spans 518 residues: Cytochrome P450 704C1 (518 aa).

2 helical membrane-spanning segments follow: residues 5–25 (ILTM…WIAS) and 299–319 (VILN…SWFI). Cys461 is a heme binding site.

Belongs to the cytochrome P450 family. The cofactor is heme.

The protein localises to the membrane. The sequence is that of Cytochrome P450 704C1 (CYP704C1) from Pinus taeda (Loblolly pine).